The chain runs to 195 residues: dTTP/UTP pyrophosphatase (195 aa).

Aspartate 73 (proton acceptor) is an active-site residue.

It belongs to the Maf family. YhdE subfamily. The cofactor is a divalent metal cation.

The protein localises to the cytoplasm. It catalyses the reaction dTTP + H2O = dTMP + diphosphate + H(+). It carries out the reaction UTP + H2O = UMP + diphosphate + H(+). Its function is as follows. Nucleoside triphosphate pyrophosphatase that hydrolyzes dTTP and UTP. May have a dual role in cell division arrest and in preventing the incorporation of modified nucleotides into cellular nucleic acids. The sequence is that of dTTP/UTP pyrophosphatase from Desulfotalea psychrophila (strain LSv54 / DSM 12343).